The following is a 453-amino-acid chain: Bifunctional protein GlmU (453 aa).

The tract at residues 1–226 (MKFSTVILAA…SIEVEGVNDR (226 aa)) is pyrophosphorylase. UDP-N-acetyl-alpha-D-glucosamine contacts are provided by residues 8-11 (LAAG), Lys-22, Gln-73, 78-79 (GT), 100-102 (YGD), Gly-137, Glu-151, Asn-166, and Asn-224. Mg(2+) is bound at residue Asp-102. Asn-224 serves as a coordination point for Mg(2+). The tract at residues 227-247 (IQLARLERAFQARQAKKLLEQ) is linker. The interval 248–453 (GVMLRDPARF…AGWQRPAKKK (206 aa)) is N-acetyltransferase. The UDP-N-acetyl-alpha-D-glucosamine site is built by Arg-330 and Lys-348. The active-site Proton acceptor is His-360. Residues Tyr-363 and Asn-374 each contribute to the UDP-N-acetyl-alpha-D-glucosamine site. Residues Ala-377, 383-384 (NY), Ser-402, Ala-420, and Arg-437 each bind acetyl-CoA.

The protein in the N-terminal section; belongs to the N-acetylglucosamine-1-phosphate uridyltransferase family. This sequence in the C-terminal section; belongs to the transferase hexapeptide repeat family. Homotrimer. The cofactor is Mg(2+).

The protein resides in the cytoplasm. The catalysed reaction is alpha-D-glucosamine 1-phosphate + acetyl-CoA = N-acetyl-alpha-D-glucosamine 1-phosphate + CoA + H(+). It catalyses the reaction N-acetyl-alpha-D-glucosamine 1-phosphate + UTP + H(+) = UDP-N-acetyl-alpha-D-glucosamine + diphosphate. It participates in nucleotide-sugar biosynthesis; UDP-N-acetyl-alpha-D-glucosamine biosynthesis; N-acetyl-alpha-D-glucosamine 1-phosphate from alpha-D-glucosamine 6-phosphate (route II): step 2/2. The protein operates within nucleotide-sugar biosynthesis; UDP-N-acetyl-alpha-D-glucosamine biosynthesis; UDP-N-acetyl-alpha-D-glucosamine from N-acetyl-alpha-D-glucosamine 1-phosphate: step 1/1. Its pathway is bacterial outer membrane biogenesis; LPS lipid A biosynthesis. Catalyzes the last two sequential reactions in the de novo biosynthetic pathway for UDP-N-acetylglucosamine (UDP-GlcNAc). The C-terminal domain catalyzes the transfer of acetyl group from acetyl coenzyme A to glucosamine-1-phosphate (GlcN-1-P) to produce N-acetylglucosamine-1-phosphate (GlcNAc-1-P), which is converted into UDP-GlcNAc by the transfer of uridine 5-monophosphate (from uridine 5-triphosphate), a reaction catalyzed by the N-terminal domain. In Vibrio cholerae serotype O1 (strain ATCC 39541 / Classical Ogawa 395 / O395), this protein is Bifunctional protein GlmU.